The following is a 469-amino-acid chain: MNPNQKIITIGSVSLTIATVCFLMQIAILATTVTLHFKQHKCDSPASNQVMPCEPIIIERNITEIVYLNNTTIEKEICPEVVEYRNWSKPQCQITGFAPFSKDNSIRLSAGGDIWVTREPYVSCDPGKCYQFALGQGTTLDNKHSNGTIHDRIPHRTLLMNELGVPFHLGTKQVCVAWSSSSCHDGKAWLHVCVTGDDRNATASFIYDGRLVDSIGSWSQNILRTQESECVCINGTCTVVMTDGSASGRADTRILFIKEGKIVHIGPLSGSAQHIEECSCYPRYPDVRCICRDNWKGSNRPVIDINMEDYSIDSSYVCSGLVGDTPRNDDSSSNSNCRDPNNERGNPGVKGWAFDNGDDVWMGRTISKDLRSGYETFKVIGGWSTPNSKSQVNRQVIVDNNNWSGYSGIFSVEGKSCINRCFYVELIRGRPQETRVWWTSNSIVVFCGTSGTYGTGSWPDGANINFMPI.

Topologically, residues methionine 1 to lysine 6 are intravirion. Residues isoleucine 7 to leucine 29 form a helical membrane-spanning segment. Positions glycine 11–valine 33 are involved in apical transport and lipid raft association. Residues alanine 30–isoleucine 469 are Virion surface-facing. The tract at residues histidine 36–serine 88 is hypervariable stalk region. N-linked (GlcNAc...) asparagine; by host glycosylation is found at asparagine 61, asparagine 69, asparagine 70, and asparagine 86. The interval glutamine 91 to isoleucine 469 is head of neuraminidase. 8 cysteine pairs are disulfide-bonded: cysteine 92-cysteine 417, cysteine 124-cysteine 129, cysteine 183-cysteine 230, cysteine 232-cysteine 237, cysteine 278-cysteine 291, cysteine 280-cysteine 289, cysteine 318-cysteine 337, and cysteine 421-cysteine 447. Arginine 118 provides a ligand contact to substrate. Asparagine 146 carries an N-linked (GlcNAc...) asparagine; by host glycan. Aspartate 151 (proton donor/acceptor) is an active-site residue. Arginine 152 is a substrate binding site. 2 N-linked (GlcNAc...) asparagine; by host glycosylation sites follow: asparagine 200 and asparagine 234. Substrate is bound at residue glutamate 276–glutamate 277. Arginine 292 provides a ligand contact to substrate. Ca(2+) contacts are provided by aspartate 293, glycine 297, and aspartate 324. Residues threonine 325 to valine 349 form a disordered region. Residue arginine 371 participates in substrate binding. An N-linked (GlcNAc...) asparagine; by host glycan is attached at asparagine 402. Tyrosine 406 functions as the Nucleophile in the catalytic mechanism.

The protein belongs to the glycosyl hydrolase 34 family. In terms of assembly, homotetramer. The cofactor is Ca(2+). In terms of processing, N-glycosylated.

It is found in the virion membrane. It localises to the host apical cell membrane. The catalysed reaction is Hydrolysis of alpha-(2-&gt;3)-, alpha-(2-&gt;6)-, alpha-(2-&gt;8)- glycosidic linkages of terminal sialic acid residues in oligosaccharides, glycoproteins, glycolipids, colominic acid and synthetic substrates.. With respect to regulation, inhibited by the neuraminidase inhibitors zanamivir (Relenza) and oseltamivir (Tamiflu). These drugs interfere with the release of progeny virus from infected cells and are effective against all influenza strains. Resistance to neuraminidase inhibitors is quite rare. Catalyzes the removal of terminal sialic acid residues from viral and cellular glycoconjugates. Cleaves off the terminal sialic acids on the glycosylated HA during virus budding to facilitate virus release. Additionally helps virus spread through the circulation by further removing sialic acids from the cell surface. These cleavages prevent self-aggregation and ensure the efficient spread of the progeny virus from cell to cell. Otherwise, infection would be limited to one round of replication. Described as a receptor-destroying enzyme because it cleaves a terminal sialic acid from the cellular receptors. May facilitate viral invasion of the upper airways by cleaving the sialic acid moieties on the mucin of the airway epithelial cells. Likely to plays a role in the budding process through its association with lipid rafts during intracellular transport. May additionally display a raft-association independent effect on budding. Plays a role in the determination of host range restriction on replication and virulence. Sialidase activity in late endosome/lysosome traffic seems to enhance virus replication. The protein is Neuraminidase of Aves (Human).